Here is a 347-residue protein sequence, read N- to C-terminus: Serpentine receptor class beta-2 (347 aa).

The next 7 membrane-spanning stretches (helical) occupy residues 27 to 47 (IAQL…YIFL), 62 to 82 (FLLV…AFLF), 108 to 128 (GNLS…GFSI), 146 to 166 (FLGP…LYHV), 194 to 214 (FWEL…FLLV), 246 to 266 (LIVS…TIFV), and 288 to 308 (ITVP…LSFM).

This sequence belongs to the nematode receptor-like protein srb family.

The protein localises to the membrane. The sequence is that of Serpentine receptor class beta-2 (srb-2) from Caenorhabditis elegans.